A 79-amino-acid chain; its full sequence is Small ribosomal subunit protein bS16cz (79 aa).

The protein belongs to the bacterial ribosomal protein bS16 family.

The protein resides in the plastid. Its subcellular location is the chloroplast. This chain is Small ribosomal subunit protein bS16cz, found in Arabidopsis thaliana (Mouse-ear cress).